We begin with the raw amino-acid sequence, 297 residues long: MGRGLLGGLWPLHVVLWTRIASTIPPHVPKSVNSDMMVTDSNGAVKLPQLCKFCDVRSSTCDNQKSCLSNCSITAICEKPQEVCVAVWRKNDENITIETVCDDPKIAYHGFVLDDAASSKCIMKERKGSGETFFMCSCSSDECNDHIIFSEEYATNNPDLLLVIFQVTGVSLLPPLGIAIAVIITFYCYRVHRQQKLSPSWDSGKPRKLMEFSEHLAIILEDDRSDISSTCANNINHNTELLPIELDTLVGKGRFAEVYKAKLRQNTSEQFETVAVKIFPYEEYASWKTEKDIFSDL.

The first 23 residues, 1 to 23 (MGRGLLGGLWPLHVVLWTRIAST), serve as a signal peptide directing secretion. At 24–166 (IPPHVPKSVN…NPDLLLVIFQ (143 aa)) the chain is on the extracellular side. Disulfide bonds link C51/C84, C54/C71, C61/C67, C77/C101, C121/C136, and C138/C143. Residues N70 and N94 are each glycosylated (N-linked (GlcNAc...) asparagine). The helical transmembrane segment at 167–187 (VTGVSLLPPLGIAIAVIITFY) threads the bilayer. The Cytoplasmic segment spans residues 188–297 (CYRVHRQQKL…KTEKDIFSDL (110 aa)). In terms of domain architecture, Protein kinase spans 244–297 (IELDTLVGKGRFAEVYKAKLRQNTSEQFETVAVKIFPYEEYASWKTEKDIFSDL). ATP contacts are provided by residues 250–258 (VGKGRFAEV) and K277.

This sequence belongs to the protein kinase superfamily. TKL Ser/Thr protein kinase family. TGFB receptor subfamily. Homodimer. Heterohexamer; TGFB1, TGFB2 and TGFB3 homodimeric ligands assemble a functional receptor composed of two TGFBR1 and TGFBR2 heterodimers to form a ligand-receptor heterohexamer. The respective affinity of TGFRB1 and TGFRB2 for the ligands may modulate the kinetics of assembly of the receptor and may explain the different biological activities of TGFB1, TGFB2 and TGFB3. Component of a complex composed of TSC22D1 (via N-terminus), TGFBR1 and TGFBR2; the interaction between TSC22D1 and TGFBR1 is inhibited by SMAD7 and promoted by TGFB1. Interacts with DAXX. Interacts with DYNLT4. Interacts with ZFYVE9; ZFYVE9 recruits SMAD2 and SMAD3 to the TGF-beta receptor. Interacts with and is activated by SCUBE3; this interaction does not affect TGFB1-binding to TGFBR2. Interacts with VPS39; this interaction is independent of the receptor kinase activity and of the presence of TGF-beta. Interacts with CLU. Mg(2+) is required as a cofactor. Requires Mn(2+) as cofactor. In terms of processing, phosphorylated on a Ser/Thr residue in the cytoplasmic domain.

It localises to the cell membrane. The protein localises to the membrane raft. The catalysed reaction is L-threonyl-[receptor-protein] + ATP = O-phospho-L-threonyl-[receptor-protein] + ADP + H(+). It catalyses the reaction L-seryl-[receptor-protein] + ATP = O-phospho-L-seryl-[receptor-protein] + ADP + H(+). In terms of biological role, transmembrane serine/threonine kinase forming with the TGF-beta type I serine/threonine kinase receptor, TGFBR1, the non-promiscuous receptor for the TGF-beta cytokines TGFB1, TGFB2 and TGFB3. Transduces the TGFB1, TGFB2 and TGFB3 signal from the cell surface to the cytoplasm and is thus regulating a plethora of physiological and pathological processes including cell cycle arrest in epithelial and hematopoietic cells, control of mesenchymal cell proliferation and differentiation, wound healing, extracellular matrix production, immunosuppression and carcinogenesis. The formation of the receptor complex composed of 2 TGFBR1 and 2 TGFBR2 molecules symmetrically bound to the cytokine dimer results in the phosphorylation and the activation of TGFRB1 by the constitutively active TGFBR2. Activated TGFBR1 phosphorylates SMAD2 which dissociates from the receptor and interacts with SMAD4. The SMAD2-SMAD4 complex is subsequently translocated to the nucleus where it modulates the transcription of the TGF-beta-regulated genes. This constitutes the canonical SMAD-dependent TGF-beta signaling cascade. Also involved in non-canonical, SMAD-independent TGF-beta signaling pathways. The chain is TGF-beta receptor type-2 (TGFBR2) from Sus scrofa (Pig).